The primary structure comprises 203 residues: V-type ATP synthase subunit D (203 aa).

This sequence belongs to the V-ATPase D subunit family.

Its function is as follows. Produces ATP from ADP in the presence of a proton gradient across the membrane. The chain is V-type ATP synthase subunit D from Streptococcus pneumoniae serotype 19F (strain G54).